Consider the following 47-residue polypeptide: Boigatoxin-A (47 aa).

At Gln1 the chain carries Pyrrolidone carboxylic acid. 2 disulfides stabilise this stretch: Cys10-Cys34 and Cys13-Cys21.

Monomer. In terms of tissue distribution, expressed by the venom gland.

It is found in the secreted. In terms of biological role, this toxin may inhibit nicotinic acetylcholine receptor (nAChR). It has poorly reversible postsynaptic blocking activity in a chick muscle preparation and readily reversible inhibitory activity at a presynaptic site in the rat vas deferens prostatic segment most likely to prevent the release of neurotransmitters. In Boiga dendrophila (Mangrove snake), this protein is Boigatoxin-A.